The following is a 774-amino-acid chain: MAEELKRSIPLLPLRGLLVYPTMVLHLDVGRDKSVQALEQAMMHDHMIFLATQQDISIDEPGEDEIFTVGTYTKIKQMLKLPNGTIRVLVEGLKRAHIVKYNEHEDYTSVDIQLIHEDDSKDTEDEALMRTLLDHFDQYIKISKKISAETYAAVTDIEEPGRMADIVASHLPLKLKDKQDILETADVKDRLNKVIDFINNEKEVLEIEKKIGQRVKRSMERTQKEYYLREQMKAIQKELGDKEGKTGEVQTLTEKIEEAGMPDHVKETALKELNRYEKIPSSSAESSVIRNYIDWLVALPWTDETDDKLDLKEAGRLLDEEHHGLEKVKERILEYLAVQKLTKSLKGPILCLAGPPGVGKTSLAKSIAKSLGRKFVRISLGGVRDESEIRGHRRTYVGAMPGRIIQGMKKAGKLNPVFLLDEIDKMSSDFRGDPSSAMLEVLDPEQNSSFSDHYIEETFDLSKVLFIATANNLATIPGPLRDRMEIINIAGYTEIEKLEIVKDHLLPKQIKEHGLKKSNLQLRDQAILDIIRYYTREAGVRSLERQLAAICRKAAKAIVAEERKRITVTEKNLQDFIGKRIFRYGQAETEDQVGVVTGLAYTTVGGDTLSIEVSLSPGKGKLILTGKLGDVMRESAQAAFSYVRSKTEELGIEPDFHEKYDIHIHVPEGAVPKDGPSAGITMATALVSALTGRAVSREVGMTGEITLRGRVLPIGGLKEKALGAHRAGLTTIIAPKDNEKDIEDIPESVREGLTFILASHLDEVLEHALVGEKK.

The 194-residue stretch at 9–202 (IPLLPLRGLL…KVIDFINNEK (194 aa)) folds into the Lon N-terminal domain. Residue 354–361 (GPPGVGKT) coordinates ATP. The Lon proteolytic domain maps to 590–771 (EDQVGVVTGL…DEVLEHALVG (182 aa)). Active-site residues include Ser677 and Lys720.

It belongs to the peptidase S16 family. In terms of assembly, homohexamer. Organized in a ring with a central cavity. Exists as a mixture of small oligomeric species in solution.

It localises to the cytoplasm. It carries out the reaction Hydrolysis of proteins in presence of ATP.. Functionally, ATP-dependent serine protease that mediates the selective degradation of mutant and abnormal proteins as well as certain short-lived regulatory proteins. Required for cellular homeostasis and for survival from DNA damage and developmental changes induced by stress. Degrades polypeptides processively to yield small peptide fragments that are 5 to 10 amino acids long. Binds to DNA in a double-stranded, site-specific manner. Has been implicated in preventing sigma(G) activity under non-sporulation conditions. In Bacillus subtilis (strain 168), this protein is Lon protease 1.